The following is a 520-amino-acid chain: Ubiquitin carboxyl-terminal hydrolase 3 (520 aa).

Met-1 bears the N-acetylmethionine mark. The UBP-type zinc-finger motif lies at 1–121; the sequence is MECPHLSSSV…QKVREHLQNL (121 aa). Positions 3, 5, 29, 32, 41, 44, 49, 56, 60, 82, 95, and 98 each coordinate Zn(2+). Residues 159-511 enclose the USP domain; it reads TGLRNLGNTC…KAYILFYVER (353 aa). Catalysis depends on Cys-168, which acts as the Nucleophile. His-471 functions as the Proton acceptor in the catalytic mechanism.

The protein belongs to the peptidase C19 family. USP3 subfamily. As to quaternary structure, interacts (via UBP-type domain) with H2A; the interaction is less efficient than with monoubiquitinated H2A.

The protein resides in the nucleus. Its subcellular location is the cytoplasm. The catalysed reaction is Thiol-dependent hydrolysis of ester, thioester, amide, peptide and isopeptide bonds formed by the C-terminal Gly of ubiquitin (a 76-residue protein attached to proteins as an intracellular targeting signal).. Its function is as follows. Deubiquitinase that plays a role in several cellular processes including transcriptional regulation, cell cycle progression or innate immunity. In response to DNA damage, deubiquitinates monoubiquitinated target proteins such as histone H2A and H2AX and thereby counteracts RNF168- and RNF8-mediated ubiquitination. In turn, participates in the recruitment of DNA damage repair factors to DNA break sites. Required for proper progression through S phase and subsequent mitotic entry. Acts as a positive regulator of TP53 by deubiquitinating and stabilizing it to promote normal cell proliferation and transformation. Participates in establishing tolerance innate immune memory through non-transcriptional feedback. Mechanistically, negatively regulates TLR-induced NF-kappa-B signaling by targeting and removing the 'Lys-63'-linked polyubiquitin chains on MYD88. Negatively regulates the activation of type I interferon signaling by mediating 'Lys-63'-linked polyubiquitin chains on RIGI and IFIH1. Also deubiquinates ASC/PYCARD, the central adapter mediating the assembly and activation of most inflammasomes, and thereby promotes inflammasome activation. The polypeptide is Ubiquitin carboxyl-terminal hydrolase 3 (Usp3) (Mus musculus (Mouse)).